The chain runs to 64 residues: Large ribosomal subunit protein bL33c (64 aa).

Belongs to the bacterial ribosomal protein bL33 family.

Its subcellular location is the plastid. It is found in the chloroplast. This chain is Large ribosomal subunit protein bL33c (rpl33), found in Mesostigma viride (Green alga).